A 340-amino-acid polypeptide reads, in one-letter code: Ketol-acid reductoisomerase (NADP(+)) (340 aa).

One can recognise a KARI N-terminal Rossmann domain in the interval 1–183; that stretch reads MAITVYYDKD…GGGRTGIIET (183 aa). Residues 26-29, Ser54, and 84-87 each bind NADP(+); these read FGSQ and DEFQ. Residue His109 is part of the active site. Gly135 is a binding site for NADP(+). The 146-residue stretch at 184–329 folds into the KARI C-terminal knotted domain; sequence TFKAETETDL…EKLRGMMPWI (146 aa). The Mg(2+) site is built by Asp192, Glu196, Glu228, and Glu232. Ser253 serves as a coordination point for substrate.

It belongs to the ketol-acid reductoisomerase family. The cofactor is Mg(2+).

It carries out the reaction (2R)-2,3-dihydroxy-3-methylbutanoate + NADP(+) = (2S)-2-acetolactate + NADPH + H(+). The enzyme catalyses (2R,3R)-2,3-dihydroxy-3-methylpentanoate + NADP(+) = (S)-2-ethyl-2-hydroxy-3-oxobutanoate + NADPH + H(+). It participates in amino-acid biosynthesis; L-isoleucine biosynthesis; L-isoleucine from 2-oxobutanoate: step 2/4. It functions in the pathway amino-acid biosynthesis; L-valine biosynthesis; L-valine from pyruvate: step 2/4. Its function is as follows. Involved in the biosynthesis of branched-chain amino acids (BCAA). Catalyzes an alkyl-migration followed by a ketol-acid reduction of (S)-2-acetolactate (S2AL) to yield (R)-2,3-dihydroxy-isovalerate. In the isomerase reaction, S2AL is rearranged via a Mg-dependent methyl migration to produce 3-hydroxy-3-methyl-2-ketobutyrate (HMKB). In the reductase reaction, this 2-ketoacid undergoes a metal-dependent reduction by NADPH to yield (R)-2,3-dihydroxy-isovalerate. The chain is Ketol-acid reductoisomerase (NADP(+)) from Campylobacter fetus subsp. fetus (strain 82-40).